Consider the following 87-residue polypeptide: Exendin-4 (87 aa).

Residues 1-23 form the signal peptide; sequence MKIILWLCVFGLFLATLFPISWQ. The propeptide occupies 24–45; that stretch reads MPVESGLSSEDSASSESFASKI. Residue S86 is modified to Serine amide.

Belongs to the glucagon family. In terms of tissue distribution, expressed by the venom gland.

The protein resides in the secreted. In terms of biological role, venom protein that mimics the incretin hormone glucagon-like peptide 1 (GLP-1). It stimulates insulin synthesis and secretion, protects against beta-cell apoptosis in response to different insults, and promotes beta-cell proliferation It also promotes satiety, reduces food intake, reduces fat deposition, reduces body weight and inhibits gastric emptying. Interacts with GLP-1 receptor (GLP1R). Induces hypotension that is mediated by relaxation of cardiac smooth muscle. The chain is Exendin-4 from Heloderma suspectum cinctum (Banded Gila monster).